Reading from the N-terminus, the 218-residue chain is Dynein axonemal assembly factor 6 (218 aa).

Residues 66 to 103 (MGPGNIGPPKAKESKAIPEPRSDESENIWNPEEVPEGA) form a disordered region. Over residues 75–89 (KAKESKAIPEPRSDE) the composition is skewed to basic and acidic residues.

Belongs to the PIH1 family. As to quaternary structure, interacts with HSPA1A/B, HSP90AA1 and DNAI2. Interacts with DNAAF2 and DNAAF4. As to expression, specifically expressed in testis. Detected in pachytene spermatocytes from 5 weeks of age and in pachytene and diplotene spermatocytes of adult mice. Not detected in spermatids or mature sperm.

It localises to the cytoplasm. Its subcellular location is the golgi apparatus. The protein resides in the trans-Golgi network. Plays a role in cytoplasmic pre-assembly of axonemal dynein. The polypeptide is Dynein axonemal assembly factor 6 (Mus musculus (Mouse)).